Here is a 211-residue protein sequence, read N- to C-terminus: Urease accessory protein UreG (211 aa).

11–18 (GPVGSGKT) is a binding site for GTP.

This sequence belongs to the SIMIBI class G3E GTPase family. UreG subfamily. In terms of assembly, homodimer. UreD, UreF and UreG form a complex that acts as a GTP-hydrolysis-dependent molecular chaperone, activating the urease apoprotein by helping to assemble the nickel containing metallocenter of UreC. The UreE protein probably delivers the nickel.

It is found in the cytoplasm. Its function is as follows. Facilitates the functional incorporation of the urease nickel metallocenter. This process requires GTP hydrolysis, probably effectuated by UreG. The sequence is that of Urease accessory protein UreG from Laribacter hongkongensis (strain HLHK9).